The following is a 295-amino-acid chain: Bifunctional protein FolD (295 aa).

Residues 166 to 168 (GRS), Ser191, and Ile232 each bind NADP(+).

Belongs to the tetrahydrofolate dehydrogenase/cyclohydrolase family. Homodimer.

The enzyme catalyses (6R)-5,10-methylene-5,6,7,8-tetrahydrofolate + NADP(+) = (6R)-5,10-methenyltetrahydrofolate + NADPH. It catalyses the reaction (6R)-5,10-methenyltetrahydrofolate + H2O = (6R)-10-formyltetrahydrofolate + H(+). The protein operates within one-carbon metabolism; tetrahydrofolate interconversion. Its function is as follows. Catalyzes the oxidation of 5,10-methylenetetrahydrofolate to 5,10-methenyltetrahydrofolate and then the hydrolysis of 5,10-methenyltetrahydrofolate to 10-formyltetrahydrofolate. This Rhodopseudomonas palustris (strain ATCC BAA-98 / CGA009) protein is Bifunctional protein FolD.